A 300-amino-acid chain; its full sequence is Protoheme IX farnesyltransferase (300 aa).

Transmembrane regions (helical) follow at residues 20 to 40 (ITKM…YFLG), 43 to 63 (TIDF…VGAS), 94 to 114 (PVAF…LYVI), 116 to 136 (PKTA…YTPL), 142 to 162 (LSVF…WVAA), 173 to 193 (LFMI…WWLF), 215 to 235 (IQII…VFGV), 241 to 261 (LTPV…YYAI), and 276 to 296 (MFAS…DKFI).

Belongs to the UbiA prenyltransferase family. Protoheme IX farnesyltransferase subfamily.

It localises to the cell membrane. The enzyme catalyses heme b + (2E,6E)-farnesyl diphosphate + H2O = Fe(II)-heme o + diphosphate. Its pathway is porphyrin-containing compound metabolism; heme O biosynthesis; heme O from protoheme: step 1/1. Its function is as follows. Converts heme B (protoheme IX) to heme O by substitution of the vinyl group on carbon 2 of heme B porphyrin ring with a hydroxyethyl farnesyl side group. This is Protoheme IX farnesyltransferase from Christiangramia forsetii (strain DSM 17595 / CGMCC 1.15422 / KT0803) (Gramella forsetii).